The primary structure comprises 138 residues: Acidic phospholipase A2 (138 aa).

The N-terminal stretch at 1–16 is a signal peptide; that stretch reads MRTLWIVAVLLLGVEG. 7 disulfide bridges follow: Cys-42–Cys-131, Cys-44–Cys-60, Cys-59–Cys-111, Cys-65–Cys-138, Cys-66–Cys-104, Cys-73–Cys-97, and Cys-91–Cys-102. Residues Tyr-43, Gly-45, and Gly-47 each coordinate Ca(2+). His-63 is an active-site residue. A Ca(2+)-binding site is contributed by Asp-64. Asp-105 is an active-site residue.

It belongs to the phospholipase A2 family. Group II subfamily. D49 sub-subfamily. Homodimer. Requires Ca(2+) as cofactor. In terms of tissue distribution, expressed by the venom gland.

It is found in the secreted. It catalyses the reaction a 1,2-diacyl-sn-glycero-3-phosphocholine + H2O = a 1-acyl-sn-glycero-3-phosphocholine + a fatty acid + H(+). PLA2 catalyzes the calcium-dependent hydrolysis of the 2-acyl groups in 3-sn-phosphoglycerides. The chain is Acidic phospholipase A2 from Crotalus atrox (Western diamondback rattlesnake).